The following is a 181-amino-acid chain: Large ribosomal subunit protein uL5 (181 aa).

It belongs to the universal ribosomal protein uL5 family. Part of the 50S ribosomal subunit; part of the 5S rRNA/L5/L18/L25 subcomplex. Contacts the 5S rRNA and the P site tRNA. Forms a bridge to the 30S subunit in the 70S ribosome.

Its function is as follows. This is one of the proteins that bind and probably mediate the attachment of the 5S RNA into the large ribosomal subunit, where it forms part of the central protuberance. In the 70S ribosome it contacts protein S13 of the 30S subunit (bridge B1b), connecting the 2 subunits; this bridge is implicated in subunit movement. Contacts the P site tRNA; the 5S rRNA and some of its associated proteins might help stabilize positioning of ribosome-bound tRNAs. This is Large ribosomal subunit protein uL5 from Helicobacter acinonychis (strain Sheeba).